The primary structure comprises 383 residues: Subtelomeric hrmA-associated cluster protein AFUB_078970 (383 aa).

Disordered stretches follow at residues 118–145 (NPVS…KDDD) and 249–318 (QATQ…SARP). Residues 119 to 134 (PVSEVPESPPSTVKSS) show a composition bias toward low complexity. Positions 318–364 (PYSAAEDDILQTLVARGLAWEEIEKEFGLRFAKRTMRSLQMRWSRKL) constitute a Myb-like domain.

Myb-like domain-containing protein; part of the subtelomeric hrmA-associated cluster (HAC) containing genes that alter the hyphal surface (such as reduced total chitin or increased beta-glucan exposure) and perturb inter-hyphal interactions within the developing biofilms, resulting in a loss of vertically aligned polarized growing filaments. Consequently, this hypoxia-typic morphotype (called H-MORPH) with altered biofilm architecture leads to increased hypoxia fitness, increased host inflammation, rapid disease progression, and mortality in a murine model of invasive aspergillosis. The protein is Subtelomeric hrmA-associated cluster protein AFUB_078970 of Aspergillus fumigatus (strain CBS 144.89 / FGSC A1163 / CEA10) (Neosartorya fumigata).